Consider the following 141-residue polypeptide: Translation initiation factor 2 subunit beta (141 aa).

This sequence belongs to the eIF-2-beta/eIF-5 family. As to quaternary structure, heterotrimer composed of an alpha, a beta and a gamma chain.

Functionally, eIF-2 functions in the early steps of protein synthesis by forming a ternary complex with GTP and initiator tRNA. This Sulfolobus acidocaldarius (strain ATCC 33909 / DSM 639 / JCM 8929 / NBRC 15157 / NCIMB 11770) protein is Translation initiation factor 2 subunit beta.